The chain runs to 670 residues: Glycine--tRNA ligase beta subunit (670 aa).

Belongs to the class-II aminoacyl-tRNA synthetase family. As to quaternary structure, tetramer of two alpha and two beta subunits.

Its subcellular location is the cytoplasm. The catalysed reaction is tRNA(Gly) + glycine + ATP = glycyl-tRNA(Gly) + AMP + diphosphate. The sequence is that of Glycine--tRNA ligase beta subunit from Thermotoga neapolitana (strain ATCC 49049 / DSM 4359 / NBRC 107923 / NS-E).